A 61-amino-acid polypeptide reads, in one-letter code: Small ribosomal subunit protein uS14 (61 aa).

The Zn(2+) site is built by C24, C27, C40, and C43.

Belongs to the universal ribosomal protein uS14 family. Zinc-binding uS14 subfamily. As to quaternary structure, part of the 30S ribosomal subunit. Contacts proteins S3 and S10. Zn(2+) is required as a cofactor.

Binds 16S rRNA, required for the assembly of 30S particles and may also be responsible for determining the conformation of the 16S rRNA at the A site. The chain is Small ribosomal subunit protein uS14 from Syntrophus aciditrophicus (strain SB).